The primary structure comprises 639 residues: Protein DYAD (639 aa).

Positions 201-226 (RHIDTRKNKEGEESSRVKDEVYKEEE) are enriched in basic and acidic residues. The interval 201-256 (RHIDTRKNKEGEESSRVKDEVYKEEEMEKEEDDDDGNEIGGTKQEAKEITNGNRKR) is disordered. Residues 227-237 (MEKEEDDDDGN) show a composition bias toward acidic residues. The 148-residue stretch at 351–498 (GKVAPGGQDR…RKMEEDMGWL (148 aa)) folds into the PI-PLC X-box domain. Positions 536-561 (NKGNQITESPQNREKGRKHDQQERSP) are disordered. Residues 546-558 (QNREKGRKHDQQE) show a composition bias toward basic and acidic residues.

In terms of tissue distribution, meiocytes (at protein level).

It localises to the nucleus. In terms of biological role, required for fertility. Involved in chromatid cohesion establishment, in chromosome structure during male and female meiosis (e.g. the synapse formation between homologous chromosomes, the recombination, and the cohesion of both chromatid arm and centromere), and in axial element formation. Regulates the switch from mitosis to the reductional meiosis division of megaspores prior to the female gametogenesis (megasporogenesis). The protein is Protein DYAD (DYAD) of Arabidopsis thaliana (Mouse-ear cress).